The sequence spans 71 residues: Small ribosomal subunit protein bS21 (71 aa).

A compositionally biased stretch (basic residues) spans 49–59 (KAAAVKRAAKK). A disordered region spans residues 49–71 (KAAAVKRAAKKVSRENARRVRMY). Residues 60–71 (VSRENARRVRMY) show a composition bias toward basic and acidic residues.

This sequence belongs to the bacterial ribosomal protein bS21 family.

The sequence is that of Small ribosomal subunit protein bS21 from Colwellia psychrerythraea (strain 34H / ATCC BAA-681) (Vibrio psychroerythus).